A 442-amino-acid polypeptide reads, in one-letter code: Putative neutral sphingomyelinase (442 aa).

Residue Glu-46 coordinates Mg(2+). The active-site Proton acceptor is the His-264. Residues Ala-309–Ser-330 are disordered. The segment covering Ser-318 to Ser-330 has biased composition (polar residues). 2 consecutive transmembrane segments (helical) span residues Arg-362–Ala-384 and Ile-391–Trp-413.

It belongs to the neutral sphingomyelinase family.

It is found in the membrane. The catalysed reaction is a sphingomyelin + H2O = phosphocholine + an N-acylsphing-4-enine + H(+). Its pathway is lipid metabolism; sphingolipid metabolism. The polypeptide is Putative neutral sphingomyelinase (Drosophila melanogaster (Fruit fly)).